A 453-amino-acid chain; its full sequence is UDP-N-acetylmuramoylalanine--D-glutamate ligase (453 aa).

Gly119–Thr125 contributes to the ATP binding site.

This sequence belongs to the MurCDEF family.

It localises to the cytoplasm. The catalysed reaction is UDP-N-acetyl-alpha-D-muramoyl-L-alanine + D-glutamate + ATP = UDP-N-acetyl-alpha-D-muramoyl-L-alanyl-D-glutamate + ADP + phosphate + H(+). Its pathway is cell wall biogenesis; peptidoglycan biosynthesis. In terms of biological role, cell wall formation. Catalyzes the addition of glutamate to the nucleotide precursor UDP-N-acetylmuramoyl-L-alanine (UMA). The chain is UDP-N-acetylmuramoylalanine--D-glutamate ligase from Syntrophus aciditrophicus (strain SB).